The sequence spans 170 residues: Lipoprotein signal peptidase (170 aa).

The next 3 helical transmembrane spans lie at 12-32 (WYWV…WVLA), 67-87 (WQRW…TVWL), and 93-113 (SLWK…GNLI). Catalysis depends on residues D123 and D141. The chain crosses the membrane as a helical span at residues 137–157 (FNIADSAIFIGAVLIIWDSFF).

It belongs to the peptidase A8 family.

The protein resides in the cell inner membrane. It carries out the reaction Release of signal peptides from bacterial membrane prolipoproteins. Hydrolyzes -Xaa-Yaa-Zaa-|-(S,diacylglyceryl)Cys-, in which Xaa is hydrophobic (preferably Leu), and Yaa (Ala or Ser) and Zaa (Gly or Ala) have small, neutral side chains.. It functions in the pathway protein modification; lipoprotein biosynthesis (signal peptide cleavage). This protein specifically catalyzes the removal of signal peptides from prolipoproteins. The polypeptide is Lipoprotein signal peptidase (Shewanella sp. (strain MR-4)).